Here is a 102-residue protein sequence, read N- to C-terminus: Protamine-2 (102 aa).

Residues 1-102 (MVRYRMRSLS…RTRRRRCRRH (102 aa)) are disordered. 2 positions are modified to phosphoserine: serine 8 and serine 10. Basic and acidic residues predominate over residues 8 to 17 (SLSERSHEVH). Low complexity predominate over residues 18–29 (GQQVHGQDQGHN). A compositionally biased stretch (basic and acidic residues) spans 39-48 (EHVEVYERTH). Positions 49-102 (GHSHYRRRHCSRRRLHRIHRRRHRSCRRRRRRSCRHRRRHRRGCRTRRRRCRRH) are enriched in basic residues.

The protein belongs to the protamine P2 family. As to quaternary structure, interacts with TDRP. In terms of processing, proteolytic processing into mature chains is required for histone eviction during spermatogenesis. Transition proteins (TNP1 and TNP2) are required for processing. In terms of tissue distribution, testis.

The protein resides in the nucleus. It localises to the chromosome. In terms of biological role, protamines substitute for histones in the chromatin of sperm during the haploid phase of spermatogenesis. They compact sperm DNA into a highly condensed, stable and inactive complex. The chain is Protamine-2 (PRM2) from Macaca mulatta (Rhesus macaque).